The following is a 453-amino-acid chain: Acyl-coenzyme A thioesterase 2, mitochondrial (453 aa).

A mitochondrion-targeting transit peptide spans 1–42 (MVASSFAVLRASRLCQQDWKSWARLFVPPPLSTGGRTTWART). The residue at position 83 (K83) is an N6-acetyllysine. Active-site charge relay system residues include S273, D365, and H399. K447 carries the post-translational modification N6-succinyllysine.

This sequence belongs to the C/M/P thioester hydrolase family. Monomer. Highly expressed in brown and white adipose tissue, muscle, heart, kidney, lung, adrenal gland and spleen; weakly expressed in intestine, testis and brain.

It is found in the mitochondrion matrix. It carries out the reaction hexadecanoyl-CoA + H2O = hexadecanoate + CoA + H(+). It catalyses the reaction tetradecanoyl-CoA + H2O = tetradecanoate + CoA + H(+). The enzyme catalyses octadecanoyl-CoA + H2O = octadecanoate + CoA + H(+). The catalysed reaction is eicosanoyl-CoA + H2O = eicosanoate + CoA + H(+). It carries out the reaction decanoyl-CoA + H2O = decanoate + CoA + H(+). It catalyses the reaction dodecanoyl-CoA + H2O = dodecanoate + CoA + H(+). The enzyme catalyses (9Z)-octadecenoyl-CoA + H2O = (9Z)-octadecenoate + CoA + H(+). The catalysed reaction is (9Z)-hexadecenoyl-CoA + H2O = (9Z)-hexadecenoate + CoA + H(+). It carries out the reaction (9E)-octadecenoyl-CoA + H2O = (9E)-octadecenoate + CoA + H(+). It catalyses the reaction (9Z,12Z)-octadecadienoyl-CoA + H2O = (9Z,12Z)-octadecadienoate + CoA + H(+). The protein operates within lipid metabolism; fatty acid metabolism. In terms of biological role, catalyzes the hydrolysis of acyl-CoAs into free fatty acids and coenzyme A (CoASH), regulating their respective intracellular levels. Displays higher activity toward long chain acyl CoAs (C14-C20). The enzyme is involved in enhancing the hepatic fatty acid oxidation in mitochondria. This chain is Acyl-coenzyme A thioesterase 2, mitochondrial (Acot2), found in Mus musculus (Mouse).